The sequence spans 270 residues: FKBP-type peptidyl-prolyl cis-trans isomerase FkpA (270 aa).

An N-terminal signal peptide occupies residues 1 to 25 (MKSLFKVTLLATTMAVALHAPITFA). The PPIase FKBP-type domain occupies 164 to 249 (SDTVVVNYKG…VFDVELLDVK (86 aa)).

The protein belongs to the FKBP-type PPIase family.

The protein localises to the periplasm. The enzyme catalyses [protein]-peptidylproline (omega=180) = [protein]-peptidylproline (omega=0). Its function is as follows. PPIases accelerate the folding of proteins. It catalyzes the cis-trans isomerization of proline imidic peptide bonds in oligopeptides. This chain is FKBP-type peptidyl-prolyl cis-trans isomerase FkpA (fkpA), found in Escherichia coli O157:H7.